The chain runs to 421 residues: Serine--tRNA ligase (421 aa).

227–229 is an L-serine binding site; that stretch reads TSE. Residues 257-259 and valine 273 each bind ATP; that span reads RRE. Glutamate 280 is a binding site for L-serine. 344–347 is a binding site for ATP; it reads ELTS. Threonine 379 contacts L-serine.

This sequence belongs to the class-II aminoacyl-tRNA synthetase family. Type-1 seryl-tRNA synthetase subfamily. Homodimer. The tRNA molecule binds across the dimer.

The protein resides in the cytoplasm. The enzyme catalyses tRNA(Ser) + L-serine + ATP = L-seryl-tRNA(Ser) + AMP + diphosphate + H(+). It carries out the reaction tRNA(Sec) + L-serine + ATP = L-seryl-tRNA(Sec) + AMP + diphosphate + H(+). It functions in the pathway aminoacyl-tRNA biosynthesis; selenocysteinyl-tRNA(Sec) biosynthesis; L-seryl-tRNA(Sec) from L-serine and tRNA(Sec): step 1/1. In terms of biological role, catalyzes the attachment of serine to tRNA(Ser). Is also able to aminoacylate tRNA(Sec) with serine, to form the misacylated tRNA L-seryl-tRNA(Sec), which will be further converted into selenocysteinyl-tRNA(Sec). The chain is Serine--tRNA ligase from Leifsonia xyli subsp. xyli (strain CTCB07).